The sequence spans 391 residues: DNA-directed RNA polymerase subunit Rpo1C (391 aa).

It belongs to the RNA polymerase beta' chain family. In terms of assembly, part of the RNA polymerase complex.

Its subcellular location is the cytoplasm. It localises to the chromosome. It carries out the reaction RNA(n) + a ribonucleoside 5'-triphosphate = RNA(n+1) + diphosphate. DNA-dependent RNA polymerase (RNAP) catalyzes the transcription of DNA into RNA using the four ribonucleoside triphosphates as substrates. Forms part of the jaw domain. This chain is DNA-directed RNA polymerase subunit Rpo1C, found in Thermococcus kodakarensis (strain ATCC BAA-918 / JCM 12380 / KOD1) (Pyrococcus kodakaraensis (strain KOD1)).